Consider the following 46-residue polypeptide: Mu-segestritoxin-Sf1h (46 aa).

Intrachain disulfides connect Cys3-Cys19, Cys10-Cys22, Cys18-Cys42, and Cys24-Cys40. Residues Arg31 to Trp33 are keys region for toxin activity.

Belongs to the neurotoxin 16 (SFI) family. In terms of tissue distribution, expressed by the venom gland.

The protein localises to the secreted. Insecticidal toxin. It inhibits insect voltage-gated sodium channels (Nav) by partially blocking the channel pore in DUM neurons from the American cockroach, not by acting as a gating modifier. The inhibition is only partially reversible after prolonged washout. In vivo, the toxin causes flaccid paralysis followed by death when injected into Heliothis virescens larvae. It also causes uncoordinated movements followed by full paralysis to sheep blowflies (Lucilia cuprina). When the toxin is fused to snowdrop lectin, it is orally active against larvae of the tomato moth (Laconobia oleracea), the rice brown planthopper (Nilaparvata lugens), and the peach-potato aphid (Myzus persicae). In Segestria florentina (Tube-web spider), this protein is Mu-segestritoxin-Sf1h.